A 283-amino-acid polypeptide reads, in one-letter code: Nucleotide-binding protein ACIAD3059 (283 aa).

9-16 (GQSGSGKS) lines the ATP pocket. 59–62 (DVRS) serves as a coordination point for GTP.

The protein belongs to the RapZ-like family.

Its function is as follows. Displays ATPase and GTPase activities. The chain is Nucleotide-binding protein ACIAD3059 from Acinetobacter baylyi (strain ATCC 33305 / BD413 / ADP1).